Reading from the N-terminus, the 147-residue chain is UPF0306 protein YhbP (147 aa).

It belongs to the UPF0306 family.

This is UPF0306 protein YhbP from Escherichia coli O7:K1 (strain IAI39 / ExPEC).